Consider the following 561-residue polypeptide: Asparagine synthetase [glutamine-hydrolyzing] (561 aa).

Cys2 acts as the For GATase activity in catalysis. In terms of domain architecture, Glutamine amidotransferase type-2 spans 2 to 191 (CGIWALFGSD…PGHYEVLDLK (190 aa)). Residues 49–53 (RLAVV), 75–77 (NGE), and Asp97 each bind L-glutamine. Residues 213–536 (HALYDGVEKL…PGRADWLPHY (324 aa)) form the Asparagine synthetase domain. ATP contacts are provided by residues Leu256, Ile288, and 363–364 (SG). Lys385 bears the N6-acetyllysine mark. Thr545 is modified (phosphothreonine).

The enzyme catalyses L-aspartate + L-glutamine + ATP + H2O = L-asparagine + L-glutamate + AMP + diphosphate + H(+). Its pathway is amino-acid biosynthesis; L-asparagine biosynthesis; L-asparagine from L-aspartate (L-Gln route): step 1/1. The chain is Asparagine synthetase [glutamine-hydrolyzing] (ASNS) from Bos taurus (Bovine).